Reading from the N-terminus, the 124-residue chain is Con-Ins Tx1 (124 aa).

An N-terminal signal peptide occupies residues 1-24; the sequence is MTTSSYFLLVALGLLLYVFQSSFG. Disulfide bonds link cysteine 29/cysteine 107, cysteine 41/cysteine 110, cysteine 53/cysteine 123, and cysteine 109/cysteine 114. 4-hydroxyproline; partial is present on proline 34. Positions 59 to 92 are cleaved as a propeptide — c peptide; that stretch reads EQGGANNARANTGRTSSLMKRRGFLSLLKKRGKR. Glutamate 118 carries the 4-carboxyglutamate; partial modification.

The protein belongs to the insulin family. Heterodimer of A and B chains; disulfide-linked. As to expression, expressed by the venom gland.

It is found in the secreted. In terms of biological role, this venom insulin facilitates prey capture by rapidly inducing hypoglycemic shock. Intraperitoneal injection of this peptide into zebrafish lowers blood glucose with the same potency than human insulin. In vivo, when applied to water, this peptide reduces overall locomotor activity of zebrafish larvae, observed as a significant decrease in the percentage of time spent swimming and movement frequency. The protein is Con-Ins Tx1 of Conus textile (Cloth-of-gold cone).